We begin with the raw amino-acid sequence, 294 residues long: 4-hydroxy-tetrahydrodipicolinate synthase (294 aa).

Pyruvate is bound at residue Thr-47. The active-site Proton donor/acceptor is the Tyr-135. Lys-163 (schiff-base intermediate with substrate) is an active-site residue. Val-205 is a pyruvate binding site.

The protein belongs to the DapA family. Homotetramer; dimer of dimers.

It localises to the cytoplasm. The enzyme catalyses L-aspartate 4-semialdehyde + pyruvate = (2S,4S)-4-hydroxy-2,3,4,5-tetrahydrodipicolinate + H2O + H(+). The protein operates within amino-acid biosynthesis; L-lysine biosynthesis via DAP pathway; (S)-tetrahydrodipicolinate from L-aspartate: step 3/4. Catalyzes the condensation of (S)-aspartate-beta-semialdehyde [(S)-ASA] and pyruvate to 4-hydroxy-tetrahydrodipicolinate (HTPA). The polypeptide is 4-hydroxy-tetrahydrodipicolinate synthase (Rickettsia bellii (strain RML369-C)).